A 310-amino-acid polypeptide reads, in one-letter code: Putative HTH-type transcriptional regulatory protein LS215_1371 (310 aa).

In terms of domain architecture, HTH cro/C1-type spans 125–180 (LKHKREEMGYSIGDVAKFLGVSRKAIYDYEKGDSDVSLEVAEKLIDLFGDDIIGDV). Residues 136–155 (IGDVAKFLGVSRKAIYDYEK) constitute a DNA-binding region (H-T-H motif).

This Saccharolobus islandicus (strain L.S.2.15 / Lassen #1) (Sulfolobus islandicus) protein is Putative HTH-type transcriptional regulatory protein LS215_1371.